The sequence spans 174 residues: ATP-dependent protease subunit HslV (174 aa).

Threonine 2 is an active-site residue. 3 residues coordinate Na(+): glycine 157, cysteine 160, and threonine 163.

This sequence belongs to the peptidase T1B family. HslV subfamily. A double ring-shaped homohexamer of HslV is capped on each side by a ring-shaped HslU homohexamer. The assembly of the HslU/HslV complex is dependent on binding of ATP.

The protein localises to the cytoplasm. It catalyses the reaction ATP-dependent cleavage of peptide bonds with broad specificity.. With respect to regulation, allosterically activated by HslU binding. Its function is as follows. Protease subunit of a proteasome-like degradation complex believed to be a general protein degrading machinery. The chain is ATP-dependent protease subunit HslV from Shewanella oneidensis (strain ATCC 700550 / JCM 31522 / CIP 106686 / LMG 19005 / NCIMB 14063 / MR-1).